Here is a 247-residue protein sequence, read N- to C-terminus: Ribosomal RNA small subunit methyltransferase J (247 aa).

S-adenosyl-L-methionine-binding positions include 106-107 (RD), 122-123 (ER), and aspartate 168.

It belongs to the methyltransferase superfamily. RsmJ family.

The protein resides in the cytoplasm. The catalysed reaction is guanosine(1516) in 16S rRNA + S-adenosyl-L-methionine = N(2)-methylguanosine(1516) in 16S rRNA + S-adenosyl-L-homocysteine + H(+). Functionally, specifically methylates the guanosine in position 1516 of 16S rRNA. The sequence is that of Ribosomal RNA small subunit methyltransferase J from Alcanivorax borkumensis (strain ATCC 700651 / DSM 11573 / NCIMB 13689 / SK2).